Reading from the N-terminus, the 126-residue chain is Acidic phospholipase A2 4 (126 aa).

Serine 1 is a signal peptide. Positions 2-7 (NRPMPL) are excised as a propeptide. 7 disulfides stabilise this stretch: cysteine 18/cysteine 78, cysteine 33/cysteine 125, cysteine 35/cysteine 51, cysteine 50/cysteine 106, cysteine 57/cysteine 99, cysteine 67/cysteine 92, and cysteine 85/cysteine 97. 3 residues coordinate Ca(2+): tyrosine 34, glycine 36, and glycine 38. The active site involves histidine 54. A Ca(2+)-binding site is contributed by aspartate 55. The active site involves aspartate 100.

It belongs to the phospholipase A2 family. Group I subfamily. D49 sub-subfamily. Monomer. Ca(2+) serves as cofactor. Expressed by the venom gland.

Its subcellular location is the secreted. It carries out the reaction a 1,2-diacyl-sn-glycero-3-phosphocholine + H2O = a 1-acyl-sn-glycero-3-phosphocholine + a fatty acid + H(+). Functionally, snake venom phospholipase A2 (PLA2) that exhibits strong anticoagulant activity, which is not due to the catalytic activity. PLA2 catalyzes the calcium-dependent hydrolysis of the 2-acyl groups in 3-sn-phosphoglycerides. This Naja sagittifera (Andaman cobra) protein is Acidic phospholipase A2 4.